A 125-amino-acid polypeptide reads, in one-letter code: Large ribosomal subunit protein bL12 (125 aa).

The protein belongs to the bacterial ribosomal protein bL12 family. As to quaternary structure, homodimer. Part of the ribosomal stalk of the 50S ribosomal subunit. Forms a multimeric L10(L12)X complex, where L10 forms an elongated spine to which 2 to 4 L12 dimers bind in a sequential fashion. Binds GTP-bound translation factors.

In terms of biological role, forms part of the ribosomal stalk which helps the ribosome interact with GTP-bound translation factors. Is thus essential for accurate translation. The protein is Large ribosomal subunit protein bL12 of Polaromonas sp. (strain JS666 / ATCC BAA-500).